The primary structure comprises 367 residues: Chorismate synthase (367 aa).

The NADP(+) site is built by arginine 48 and arginine 54. FMN-binding positions include 125-127, 238-239, glycine 278, 293-297, and arginine 319; these read RSS, NA, and KPTSS.

This sequence belongs to the chorismate synthase family. Homotetramer. It depends on FMNH2 as a cofactor.

The catalysed reaction is 5-O-(1-carboxyvinyl)-3-phosphoshikimate = chorismate + phosphate. Its pathway is metabolic intermediate biosynthesis; chorismate biosynthesis; chorismate from D-erythrose 4-phosphate and phosphoenolpyruvate: step 7/7. In terms of biological role, catalyzes the anti-1,4-elimination of the C-3 phosphate and the C-6 proR hydrogen from 5-enolpyruvylshikimate-3-phosphate (EPSP) to yield chorismate, which is the branch point compound that serves as the starting substrate for the three terminal pathways of aromatic amino acid biosynthesis. This reaction introduces a second double bond into the aromatic ring system. This is Chorismate synthase from Xanthomonas campestris pv. campestris (strain B100).